A 316-amino-acid polypeptide reads, in one-letter code: 4-hydroxy-3-methylbut-2-enyl diphosphate reductase (316 aa).

Cys-12 provides a ligand contact to [4Fe-4S] cluster. Positions 41 and 74 each coordinate (2E)-4-hydroxy-3-methylbut-2-enyl diphosphate. Residues His-41 and His-74 each coordinate dimethylallyl diphosphate. Positions 41 and 74 each coordinate isopentenyl diphosphate. Residue Cys-96 coordinates [4Fe-4S] cluster. Residue His-124 coordinates (2E)-4-hydroxy-3-methylbut-2-enyl diphosphate. Residue His-124 coordinates dimethylallyl diphosphate. His-124 contacts isopentenyl diphosphate. Glu-126 acts as the Proton donor in catalysis. Thr-169 serves as a coordination point for (2E)-4-hydroxy-3-methylbut-2-enyl diphosphate. Position 199 (Cys-199) interacts with [4Fe-4S] cluster. The (2E)-4-hydroxy-3-methylbut-2-enyl diphosphate site is built by Ser-227, Ser-228, Asn-229, and Ser-271. The dimethylallyl diphosphate site is built by Ser-227, Ser-228, Asn-229, and Ser-271. Isopentenyl diphosphate-binding residues include Ser-227, Ser-228, Asn-229, and Ser-271.

It belongs to the IspH family. [4Fe-4S] cluster is required as a cofactor.

The enzyme catalyses isopentenyl diphosphate + 2 oxidized [2Fe-2S]-[ferredoxin] + H2O = (2E)-4-hydroxy-3-methylbut-2-enyl diphosphate + 2 reduced [2Fe-2S]-[ferredoxin] + 2 H(+). It carries out the reaction dimethylallyl diphosphate + 2 oxidized [2Fe-2S]-[ferredoxin] + H2O = (2E)-4-hydroxy-3-methylbut-2-enyl diphosphate + 2 reduced [2Fe-2S]-[ferredoxin] + 2 H(+). Its pathway is isoprenoid biosynthesis; dimethylallyl diphosphate biosynthesis; dimethylallyl diphosphate from (2E)-4-hydroxy-3-methylbutenyl diphosphate: step 1/1. The protein operates within isoprenoid biosynthesis; isopentenyl diphosphate biosynthesis via DXP pathway; isopentenyl diphosphate from 1-deoxy-D-xylulose 5-phosphate: step 6/6. Its function is as follows. Catalyzes the conversion of 1-hydroxy-2-methyl-2-(E)-butenyl 4-diphosphate (HMBPP) into a mixture of isopentenyl diphosphate (IPP) and dimethylallyl diphosphate (DMAPP). Acts in the terminal step of the DOXP/MEP pathway for isoprenoid precursor biosynthesis. The protein is 4-hydroxy-3-methylbut-2-enyl diphosphate reductase of Xylella fastidiosa (strain M12).